Reading from the N-terminus, the 114-residue chain is Large ribosomal subunit protein bL19 (114 aa).

This sequence belongs to the bacterial ribosomal protein bL19 family.

Functionally, this protein is located at the 30S-50S ribosomal subunit interface and may play a role in the structure and function of the aminoacyl-tRNA binding site. This chain is Large ribosomal subunit protein bL19 (rplS), found in Listeria innocua serovar 6a (strain ATCC BAA-680 / CLIP 11262).